We begin with the raw amino-acid sequence, 520 residues long: MAISNKQKAAIAAIVLVGGVATGGVLLSGRSAPEEQGGHSESKGHGDTEHHGKQAAEADHKDDKSHGDGEHHEVKKGPNGGALFSRDGYDVEIGTAESKGEARIRLWVSKSGKAVANGVAATGQLVRATGESQALKFVVSGDALESQQPVAEPHVFDVTANVTLPGSSSPLAVRLSKEEGKIELTADQLAKTGVVVQTAGSAKVQAGVQFPGEIRFNEDKTAHVVPRLAGVVESVPANIGQQVKKGQVLAVIASTGLSDQRSELLAAQKRLDLARVTYDREKKLWEQKISAEQDYLSARNALQEAQISVQNAQQKLTAIGASNSSTALNRYELRAPFDGMIVEKHISLGEAVADNANVFTLSDLSSVWAEFVVSAKDVERVRIGEKASINSASSDVKADGTVSYVGSLLGEQTRTAKARVTLTNPQMAWRPGLFVTVDVFGADVEVPVAVKTEAVQDVNGESVVFVAVQGGFVPQPVKVGRTNGKVIEIVEGLKPGARYAAANSFVLKAELGKSSAEHGH.

Residues 9 to 29 (AAIAAIVLVGGVATGGVLLSG) form a helical membrane-spanning segment. The segment at 28-85 (SGRSAPEEQGGHSESKGHGDTEHHGKQAAEADHKDDKSHGDGEHHEVKKGPNGGALFS) is disordered. Over residues 32–76 (APEEQGGHSESKGHGDTEHHGKQAAEADHKDDKSHGDGEHHEVKK) the composition is skewed to basic and acidic residues. The stretch at 286–320 (EQKISAEQDYLSARNALQEAQISVQNAQQKLTAIG) forms a coiled coil.

It belongs to the membrane fusion protein (MFP) (TC 8.A.1) family.

Its subcellular location is the cell inner membrane. Its function is as follows. CzcA and CzcB together would act in zinc efflux nearly as effectively as the complete czc efflux system (CzcABC). The CzcB protein is thought to funnel zinc cations to the CzcA transport protein. The chain is Cobalt-zinc-cadmium resistance protein CzcB (czcB) from Cupriavidus metallidurans (strain ATCC 43123 / DSM 2839 / NBRC 102507 / CH34) (Ralstonia metallidurans).